A 170-amino-acid polypeptide reads, in one-letter code: Probable peptide methionine sulfoxide reductase (170 aa).

Belongs to the MsrA Met sulfoxide reductase family.

The protein resides in the cytoplasm. It is found in the nucleus. The catalysed reaction is L-methionyl-[protein] + [thioredoxin]-disulfide + H2O = L-methionyl-(S)-S-oxide-[protein] + [thioredoxin]-dithiol. It catalyses the reaction [thioredoxin]-disulfide + L-methionine + H2O = L-methionine (S)-S-oxide + [thioredoxin]-dithiol. Has an important function as a repair enzyme for proteins that have been inactivated by oxidation. Catalyzes the reversible oxidation-reduction of methionine sulfoxide in proteins to methionine. This Schizosaccharomyces pombe (strain 972 / ATCC 24843) (Fission yeast) protein is Probable peptide methionine sulfoxide reductase (mxr1).